Consider the following 299-residue polypeptide: Plant-type L-asparaginase (299 aa).

The active-site Nucleophile is the Thr169. Residues 197–200 (RVGD) and 220–223 (TGVG) contribute to the substrate site.

The protein belongs to the Ntn-hydrolase family. In terms of assembly, heterotetramer of two alpha and two beta chains arranged as a dimer of alpha/beta heterodimers. The uncleaved protein forms homodimers. In terms of processing, autocleaved. Generates the alpha and beta subunits. The N-terminal residue of the beta subunit is thought to be responsible for the nucleophile hydrolase activity.

It catalyses the reaction L-asparagine + H2O = L-aspartate + NH4(+). Its activity is regulated as follows. Divalent metal ions and EDTA do not have significant effect on enzyme activity, indicating that activity is metal-independent. Functionally, catalyzes the hydrolysis of L-asparagine into L-aspartate and ammonia. Also displays D-asparaginase activity, which is about 20% of the L-asparaginase activity. Does not exhibit glutaminase activity. In Pyrobaculum calidifontis (strain DSM 21063 / JCM 11548 / VA1), this protein is Plant-type L-asparaginase.